A 621-amino-acid chain; its full sequence is Chaperone protein dnaK (621 aa).

Residues Val-597 to Ala-621 are disordered.

This sequence belongs to the heat shock protein 70 family.

It is found in the plastid. The protein localises to the chloroplast. Its function is as follows. Acts as a chaperone. This Gracilaria tenuistipitata var. liui (Red alga) protein is Chaperone protein dnaK.